The following is a 189-amino-acid chain: Frataxin-like protein, mitochondrial (189 aa).

The transit peptide at 1–50 directs the protein to the mitochondrion; that stretch reads MNCARLHQRIPLRAMALTTTSYPALAPSHSFANASTSVMTASAMAVAHRA.

It belongs to the frataxin family. In terms of assembly, interacts with IscU; the interaction is direct.

The protein resides in the mitochondrion. The enzyme catalyses 4 Fe(2+) + O2 + 4 H(+) = 4 Fe(3+) + 2 H2O. Iron-binding protein which binds 2 iron atoms per monomer. Probably, acts as an iron carrier for the biosynthesis of Fe-S clusters. Stimulates the cysteine desulphurase activity of IscS in the presence of IscU. The chain is Frataxin-like protein, mitochondrial from Leishmania donovani.